The chain runs to 110 residues: Cyclin-dependent protein kinase inhibitor SMR8 (110 aa).

Interacts with CDKA-1 and D-type cyclins. In terms of tissue distribution, expressed in the root vascular tissue.

Its function is as follows. Probable cyclin-dependent protein kinase (CDK) inhibitor that functions as a repressor of mitosis in the endoreduplication cell cycle. The protein is Cyclin-dependent protein kinase inhibitor SMR8 of Arabidopsis thaliana (Mouse-ear cress).